A 104-amino-acid polypeptide reads, in one-letter code: Iron-sulfur cluster assembly protein CyaY (104 aa).

This sequence belongs to the frataxin family.

Its function is as follows. Involved in iron-sulfur (Fe-S) cluster assembly. May act as a regulator of Fe-S biogenesis. This is Iron-sulfur cluster assembly protein CyaY from Aliivibrio salmonicida (strain LFI1238) (Vibrio salmonicida (strain LFI1238)).